A 305-amino-acid polypeptide reads, in one-letter code: UDP-3-O-acyl-N-acetylglucosamine deacetylase (305 aa).

Zn(2+) contacts are provided by His79, His238, and Asp242. His265 functions as the Proton donor in the catalytic mechanism.

It belongs to the LpxC family. Requires Zn(2+) as cofactor.

It carries out the reaction a UDP-3-O-[(3R)-3-hydroxyacyl]-N-acetyl-alpha-D-glucosamine + H2O = a UDP-3-O-[(3R)-3-hydroxyacyl]-alpha-D-glucosamine + acetate. The protein operates within glycolipid biosynthesis; lipid IV(A) biosynthesis; lipid IV(A) from (3R)-3-hydroxytetradecanoyl-[acyl-carrier-protein] and UDP-N-acetyl-alpha-D-glucosamine: step 2/6. Functionally, catalyzes the hydrolysis of UDP-3-O-myristoyl-N-acetylglucosamine to form UDP-3-O-myristoylglucosamine and acetate, the committed step in lipid A biosynthesis. This Klebsiella pneumoniae (strain 342) protein is UDP-3-O-acyl-N-acetylglucosamine deacetylase.